Here is a 198-residue protein sequence, read N- to C-terminus: Transcription factor FapR (198 aa).

Positions N102–V169 constitute a MaoC-like domain.

The protein belongs to the FapR family.

Transcriptional factor involved in regulation of membrane lipid biosynthesis by repressing genes involved in fatty acid and phospholipid metabolism. In Geobacillus sp. (strain WCH70), this protein is Transcription factor FapR.